The chain runs to 112 residues: Small ribosomal subunit protein uS17 (112 aa).

The protein belongs to the universal ribosomal protein uS17 family. Part of the 30S ribosomal subunit.

In terms of biological role, one of the primary rRNA binding proteins, it binds specifically to the 5'-end of 16S ribosomal RNA. The protein is Small ribosomal subunit protein uS17 of Haloarcula marismortui (strain ATCC 43049 / DSM 3752 / JCM 8966 / VKM B-1809) (Halobacterium marismortui).